The sequence spans 499 residues: UDP-N-acetylmuramoylalanine--D-glutamate ligase (499 aa).

129–135 (GTNGKTT) is an ATP binding site.

The protein belongs to the MurCDEF family.

It is found in the cytoplasm. It carries out the reaction UDP-N-acetyl-alpha-D-muramoyl-L-alanine + D-glutamate + ATP = UDP-N-acetyl-alpha-D-muramoyl-L-alanyl-D-glutamate + ADP + phosphate + H(+). Its pathway is cell wall biogenesis; peptidoglycan biosynthesis. Its function is as follows. Cell wall formation. Catalyzes the addition of glutamate to the nucleotide precursor UDP-N-acetylmuramoyl-L-alanine (UMA). The sequence is that of UDP-N-acetylmuramoylalanine--D-glutamate ligase from Ralstonia nicotianae (strain ATCC BAA-1114 / GMI1000) (Ralstonia solanacearum).